Reading from the N-terminus, the 291-residue chain is uncharacterized protein (291 aa).

The 192-residue stretch at 5–196 (GVFSGGGVKG…LSNFPIWLFS (192 aa)) folds into the PNPLA domain. A GXGXXG motif is present at residues 9-14 (GGGVKG). The helical transmembrane segment at 34–50 (VAGTSAGAIIAAFIASG) threads the bilayer. A GXSXG motif is present at residues 36–40 (GTSAG). The active-site Nucleophile is the Ser38. Asp183 acts as the Proton acceptor in catalysis. The DGA/G motif lies at 183–185 (DGG).

The protein localises to the cell membrane. Functionally, probable lipid hydrolase. This is an uncharacterized protein from Bacillus subtilis (strain 168).